An 866-amino-acid polypeptide reads, in one-letter code: Leucine--tRNA ligase (866 aa).

The 'HIGH' region signature appears at 59-69; that stretch reads PYPSGDLHMGH. The disordered stretch occupies residues 393–421; the sequence is VPVIKTDPQTGEPLLPESAPLESPAETGQ. The segment covering 404 to 418 has biased composition (low complexity); sequence EPLLPESAPLESPAE. Residues 628–632 carry the 'KMSKS' region motif; sequence AMSKS. Residue lysine 631 coordinates ATP.

This sequence belongs to the class-I aminoacyl-tRNA synthetase family.

It is found in the cytoplasm. The enzyme catalyses tRNA(Leu) + L-leucine + ATP = L-leucyl-tRNA(Leu) + AMP + diphosphate. The chain is Leucine--tRNA ligase from Leifsonia xyli subsp. xyli (strain CTCB07).